A 365-amino-acid polypeptide reads, in one-letter code: Flagellar P-ring protein (365 aa).

An N-terminal signal peptide occupies residues 1 to 19 (MMLSLCAIAGLLLAPSIQA).

This sequence belongs to the FlgI family. In terms of assembly, the basal body constitutes a major portion of the flagellar organelle and consists of four rings (L,P,S, and M) mounted on a central rod.

Its subcellular location is the periplasm. It localises to the bacterial flagellum basal body. Its function is as follows. Assembles around the rod to form the L-ring and probably protects the motor/basal body from shearing forces during rotation. The polypeptide is Flagellar P-ring protein (Sodalis glossinidius (strain morsitans)).